The chain runs to 1187 residues: Disease resistance protein TAO1 (1187 aa).

Residues 38 to 202 (WLHPVFLSFR…KISKDVSDVL (165 aa)) form the TIR domain. E113 is a catalytic residue. In terms of domain architecture, NB-ARC spans 217–478 (EAHTTEITSL…FFRRERIETL (262 aa)). LRR repeat units lie at residues 498–522 (DKSLLSLNLGNIEMHNLLVQLGLDI), 611–633 (SRKLRLLHWERYPLTCLPPKFNP), 635–658 (FLVKINMRDSMLEKLWDGNEPIRN), 660–679 (KWMDLSFCVNLKELPDFSTA), 680–703 (TNLQELRLINCLSLVELPSSIGNA), 704–727 (TNLLELDLIDCSSLVKLPSSIGNL), 728–750 (TNLKKLFLNRCSSLVKLPSSFGN), 752–775 (TSLKELNLSGCSSLLEIPSSIGNI), 799–823 (NTNLKELHLLNCSSLMECPSSMLNL), 824–849 (TRLEDLNLSGCLSLVKLPSIGNVINL), 870–894 (ATNLDTLYLDGCSNLLELPSSIWNI), 895–918 (TNLQSLYLNGCSSLKELPSLVENA), 920–942 (NLQSLSLMKCSSLVELPSSIWRI), and 953–974 (CSSLLELNLVSHPVVPDSLILD).

The enzyme catalyses NAD(+) + H2O = ADP-D-ribose + nicotinamide + H(+). Functionally, TIR-NB-LRR receptor-like protein that contributes to disease resistance induced by the Pseudomonas syringae type III effector AvrB. Acts additively with RPM1 to generate a full disease resistance response to P.syringae expressing this type III effector. In Arabidopsis thaliana (Mouse-ear cress), this protein is Disease resistance protein TAO1.